Reading from the N-terminus, the 298-residue chain is MNALTLPDVAAQAARQALPLEWVGMCGIALPVFIEGQRLAAKADAGVSLDDGDARGIHMSRLYLGLEAMEQQNLSPALLRQVLQRFLDSHEDLSEAAYLNIHIDLLLRRPALVSPLAGWKNYPVTVSAQLKNKVFHVELKIDVAYSSTCPCSAALARQLIQQQFVDDFANKPLQHADVLAWLGSTQGIVATPHSQRSTAQLHLHLDEFVDELPLTSIINDAEAALGTAVQTAVKRADEQAFALANGQNLMFCEDAARRLNLALRGSPGISQFHVRVIHAESLHAHDAVAESHWRREQP.

It belongs to the GTP cyclohydrolase IV family.

The enzyme catalyses GTP + H2O = 7,8-dihydroneopterin 3'-triphosphate + formate + H(+). It participates in cofactor biosynthesis; 7,8-dihydroneopterin triphosphate biosynthesis; 7,8-dihydroneopterin triphosphate from GTP: step 1/1. In terms of biological role, converts GTP to 7,8-dihydroneopterin triphosphate. The sequence is that of GTP cyclohydrolase FolE2 from Pseudomonas fluorescens (strain Pf0-1).